The primary structure comprises 1035 residues: Cell-division control histidine kinase PdhS (1035 aa).

The segment at 1-613 (MSGSYPFIDI…HADGSEEPVD (613 aa)) is important for polar localization. Residues 500–533 (QGLANTRAESETPVSETSSIEPVEPTPPVKTRSE) are disordered. The segment at 614–1035 (AHLNAIAWRG…VFPPTRVLAD (422 aa)) is interaction with DivK. One can recognise a PAS domain in the interval 659–730 (HVEELKTILD…YLHGLSGNGV (72 aa)). Residues 802–1031 (RISHEIRTPL…VVEIVFPPTR (230 aa)) form the Histidine kinase domain. The residue at position 805 (H805) is a Phosphohistidine; by autocatalysis.

Interacts with DivK.

It is found in the cytoplasm. It carries out the reaction ATP + protein L-histidine = ADP + protein N-phospho-L-histidine.. Its function is as follows. Functions as a polar differentiation marker. Essential protein that, by localizing in the old pole of dividing cells, controls cell division and maturation, probably through control of DivK phosphorylation status and cellular distribution, which in turn regulates CtrA, a transcriptional regulator of the minB operon. The asymmetrical localization of this protein is probably required for cells to enter a new division cycle. The polypeptide is Cell-division control histidine kinase PdhS (pdhS) (Brucella ovis (strain ATCC 25840 / 63/290 / NCTC 10512)).